Reading from the N-terminus, the 132-residue chain is Small ribosomal subunit protein uS8 (132 aa).

It belongs to the universal ribosomal protein uS8 family. In terms of assembly, part of the 30S ribosomal subunit. Contacts proteins S5 and S12.

Its function is as follows. One of the primary rRNA binding proteins, it binds directly to 16S rRNA central domain where it helps coordinate assembly of the platform of the 30S subunit. The chain is Small ribosomal subunit protein uS8 from Rickettsia bellii (strain OSU 85-389).